The primary structure comprises 57 residues: Large ribosomal subunit protein bL32 (57 aa).

The interval 1–23 (MAVPARHTSSAKKNRRRTHYKLT) is disordered. Residues 9-20 (SSAKKNRRRTHY) are compositionally biased toward basic residues.

The protein belongs to the bacterial ribosomal protein bL32 family.

This Lactococcus lactis subsp. cremoris (strain MG1363) protein is Large ribosomal subunit protein bL32.